A 113-amino-acid chain; its full sequence is Molt-inhibiting hormone (113 aa).

The signal sequence occupies residues 1–35; that stretch reads MMSLAHSKFSCQRTRLLAVVLLAALWSSSLQQAAA. 3 cysteine pairs are disulfide-bonded: cysteine 42/cysteine 79, cysteine 59/cysteine 75, and cysteine 62/cysteine 88.

The protein belongs to the arthropod CHH/MIH/GIH/VIH hormone family.

It localises to the secreted. Functionally, inhibits Y-organs where molting hormone (ecdysteroid) is secreted. A molting cycle is initiated when MIH secretion diminishes or stops. This is Molt-inhibiting hormone from Callinectes sapidus (Blue crab).